The following is a 32-amino-acid chain: Photosystem II reaction center protein T (32 aa).

Residues 3 to 23 (SIAYVLIFACLIGLFFFAIFF) traverse the membrane as a helical segment.

It belongs to the PsbT family. As to quaternary structure, PSII is composed of 1 copy each of membrane proteins PsbA, PsbB, PsbC, PsbD, PsbE, PsbF, PsbH, PsbI, PsbJ, PsbK, PsbL, PsbM, PsbT, PsbX, PsbY, PsbZ, Psb30/Ycf12, peripheral proteins PsbO, CyanoQ (PsbQ), PsbU, PsbV and a large number of cofactors. It forms dimeric complexes.

The protein localises to the cellular thylakoid membrane. In terms of biological role, found at the monomer-monomer interface of the photosystem II (PS II) dimer, plays a role in assembly and dimerization of PSII. PSII is a light-driven water plastoquinone oxidoreductase, using light energy to abstract electrons from H(2)O, generating a proton gradient subsequently used for ATP formation. This Cyanothece sp. (strain PCC 7425 / ATCC 29141) protein is Photosystem II reaction center protein T.